The chain runs to 184 residues: TRAF-interacting protein with FHA domain-containing protein A (184 aa).

Position 9 is a phosphothreonine; by ALPK1 (T9). The FHA domain occupies 47-103; sequence VKFGRNSNICHYTFQDKQVSRVQFSLQLFKKFNSSVLSFEIKNMSKKTNLIVDSREL. Residues 165–184 form a disordered region; sequence TYSLCSSQSSSPTEMDENES. A compositionally biased stretch (polar residues) spans 167-177; the sequence is SLCSSQSSSPT.

This sequence belongs to the TIFA family. Homooligomer; homooligomerizes following phosphorylation at Thr-9. Interacts with IRAK1, TRAF2 and TRAF6. Interacts with TIFAB; binding to TIFAB inhibits TRAF6 activation, possibly by inducing a conformational change in TIFA. Interacts with ZCCHC11; binding to ZCCHC11 suppresses the TRAF6-dependent activation of NF-kappa-B. Phosphorylated at Thr-9 following detection of ADP-D-glycero-beta-D-manno-heptose (ADP-Heptose) by ALPK1. Phosphorylation at Thr-9 by ALPK1 leads to the formation of an intermolecular binding between the FHA domain and phosphorylated Thr-9, promoting TIFA oligomerization and TIFA-mediated NF-kappa-B activation.

The protein resides in the cytoplasm. Adapter molecule that plays a key role in the activation of pro-inflammatory NF-kappa-B signaling following detection of bacterial pathogen-associated molecular pattern metabolites (PAMPs). Promotes activation of an innate immune response by inducing the oligomerization and polyubiquitination of TRAF6, which leads to the activation of TAK1 and IKK through a proteasome-independent mechanism. TIFA-dependent innate immune response is triggered by ADP-D-glycero-beta-D-manno-heptose (ADP-Heptose), a potent PAMP present in all Gram-negative and some Gram-positive bacteria: ADP-Heptose is recognized by ALPK1, which phosphorylates TIFA at Thr-9, leading to TIFA homooligomerization and subsequent activation of pro-inflammatory NF-kappa-B signaling. This Homo sapiens (Human) protein is TRAF-interacting protein with FHA domain-containing protein A.